Reading from the N-terminus, the 195-residue chain is Apoptosis-associated speck-like protein containing a CARD (195 aa).

Positions 1-91 (MGCTRDAILD…AEQLQETMSK (91 aa)) constitute a Pyrin domain. Glycyl lysine isopeptide (Lys-Gly) (interchain with G-Cter in ubiquitin) cross-links involve residues K55 and K174. The CARD domain maps to 107–195 (TAKPGLHFVD…PYLVDDLEQS (89 aa)). At S195 the chain carries Phosphoserine.

Self-associates; enforced oligomerization induces apoptosis, NF-kappa-B regulation and interleukin-1 beta secretion. Homooligomers can form disk-like particles of approximately 12 nm diameter and approximately 1 nm height. Component of several inflammasomes containing one pattern recognition receptor/sensor, such as NLRP1, NLRP2, NLRP3, NLRP6, NLRC4, AIM2, MEFV or NOD2, and probably NLRC4 or NLRP12. Major component of the ASC pyroptosome, a 1-2 um supramolecular assembly (one per macrophage cell) which consists of oligomerized PYCARD dimers and CASP1. Interacts with CASP1 (precursor form); the interaction induces activation of CASP1 leading to the processing of interleukin-1 beta; PYCARD competes with RIPK2 for binding to CASP1. Interacts with NLRP3; the interaction requires the homooligomerization of NLRP3. Interacts with NLRP2, NLRC4, MEFV, CARD16, AIM2, NOD2, RIGI, RIPK2, PYDC1, PYDC2, NLRP10, CASP8, CHUK, IKBKB and BAX. Component of the AIM2 PANoptosome complex, a multiprotein complex that drives inflammatory cell death (PANoptosis). Phosphorylated. In terms of processing, 'Lys-63'-linked polyubiquitination by TRAF3 is critical for speck formation and inflammasome activation. 'Lys-63'-linked deubiquitinated by USP50; a crucial step for NLRP3-mediated inflammasome activation. 'Lys-63'-linked polyubiquitination by PELI1 is also critical for speck formation and inflammasome activation. Deubiquitinated by USP3 that cleaves 'Lys-48'-linked ubiquitin chains and strengthens its stability by blocking proteasomal degradation.

Its subcellular location is the cytoplasm. The protein resides in the inflammasome. It is found in the endoplasmic reticulum. It localises to the mitochondrion. The protein localises to the nucleus. Its function is as follows. Functions as a key mediator in apoptosis and inflammation. Promotes caspase-mediated apoptosis involving predominantly caspase-8 and also caspase-9 in a probable cell type-specific manner. Involved in activation of the mitochondrial apoptotic pathway, promotes caspase-8-dependent proteolytic maturation of BID independently of FADD in certain cell types and also mediates mitochondrial translocation of BAX and activates BAX-dependent apoptosis coupled to activation of caspase-9, -2 and -3. Involved in innate immune response by acting as an integral adapter in the assembly of various inflammasomes (NLRP2, NLRP3, NLRP6 and AIM2) which recruit and activate caspase-1 leading to processing and secretion of pro-inflammatory cytokines. Caspase-1-dependent inflammation leads to macrophage pyroptosis, a form of cell death. The function as activating adapter in different types of inflammasomes is mediated by the pyrin and CARD domains and their homotypic interactions. Clustered PYCARD nucleates the formation of caspase-1 filaments through the interaction of their respective CARD domains, acting as a platform for of caspase-1 polymerization. In the NLRC4 inflammasomes seems not be required but facilitates the processing of procaspase-1. In cooperation with NOD2 involved in an inflammasome activated by bacterial muramyl dipeptide leading to caspase-1 activation. May be involved in RIGI-triggered pro-inflammatory responses and inflammasome activation. In collaboration with AIM2 which detects cytosolic double-stranded DNA may also be involved in a caspase-1-independent cell death that involves caspase-8. In adaptive immunity may be involved in maturation of dendritic cells to stimulate T-cell immunity and in cytoskeletal rearrangements coupled to chemotaxis and antigen uptake may be involved in post-transcriptional regulation of the guanine nucleotide exchange factor DOCK2; the latter function is proposed to involve the nuclear form. Also involved in transcriptional activation of cytokines and chemokines independent of the inflammasome; this function may involve AP-1, NF-kappa-B, MAPK and caspase-8 signaling pathways. For regulation of NF-kappa-B activating and inhibiting functions have been reported. Modulates NF-kappa-B induction at the level of the IKK complex by inhibiting kinase activity of CHUK and IKBK. Proposed to compete with RIPK2 for association with CASP1 thereby down-regulating CASP1-mediated RIPK2-dependent NF-kappa-B activation and activating interleukin-1 beta processing. Modulates host resistance to DNA virus infection, probably by inducing the cleavage of and inactivating CGAS in presence of cytoplasmic double-stranded DNA. This Bos taurus (Bovine) protein is Apoptosis-associated speck-like protein containing a CARD (PYCARD).